We begin with the raw amino-acid sequence, 361 residues long: S-adenosylmethionine:tRNA ribosyltransferase-isomerase (361 aa).

Belongs to the QueA family. Monomer.

Its subcellular location is the cytoplasm. The catalysed reaction is 7-aminomethyl-7-carbaguanosine(34) in tRNA + S-adenosyl-L-methionine = epoxyqueuosine(34) in tRNA + adenine + L-methionine + 2 H(+). It participates in tRNA modification; tRNA-queuosine biosynthesis. Its function is as follows. Transfers and isomerizes the ribose moiety from AdoMet to the 7-aminomethyl group of 7-deazaguanine (preQ1-tRNA) to give epoxyqueuosine (oQ-tRNA). The protein is S-adenosylmethionine:tRNA ribosyltransferase-isomerase of Mesorhizobium japonicum (strain LMG 29417 / CECT 9101 / MAFF 303099) (Mesorhizobium loti (strain MAFF 303099)).